Here is a 213-residue protein sequence, read N- to C-terminus: Uridine kinase (213 aa).

Residue 15–22 (GASASGKS) participates in ATP binding.

Belongs to the uridine kinase family.

It is found in the cytoplasm. The catalysed reaction is uridine + ATP = UMP + ADP + H(+). It carries out the reaction cytidine + ATP = CMP + ADP + H(+). The protein operates within pyrimidine metabolism; CTP biosynthesis via salvage pathway; CTP from cytidine: step 1/3. Its pathway is pyrimidine metabolism; UMP biosynthesis via salvage pathway; UMP from uridine: step 1/1. This chain is Uridine kinase, found in Salmonella paratyphi A (strain ATCC 9150 / SARB42).